The chain runs to 185 residues: GTP cyclohydrolase 1 (185 aa).

Residues Cys-75, His-78, and Cys-146 each contribute to the Zn(2+) site.

Belongs to the GTP cyclohydrolase I family. As to quaternary structure, toroid-shaped homodecamer, composed of two pentamers of five dimers.

The enzyme catalyses GTP + H2O = 7,8-dihydroneopterin 3'-triphosphate + formate + H(+). It functions in the pathway cofactor biosynthesis; 7,8-dihydroneopterin triphosphate biosynthesis; 7,8-dihydroneopterin triphosphate from GTP: step 1/1. In Alkalilimnicola ehrlichii (strain ATCC BAA-1101 / DSM 17681 / MLHE-1), this protein is GTP cyclohydrolase 1.